The sequence spans 395 residues: NADH-quinone oxidoreductase subunit D (395 aa).

It belongs to the complex I 49 kDa subunit family. In terms of assembly, NDH-1 is composed of 14 different subunits. Subunits NuoB, C, D, E, F, and G constitute the peripheral sector of the complex.

The protein localises to the cell inner membrane. The catalysed reaction is a quinone + NADH + 5 H(+)(in) = a quinol + NAD(+) + 4 H(+)(out). Functionally, NDH-1 shuttles electrons from NADH, via FMN and iron-sulfur (Fe-S) centers, to quinones in the respiratory chain. The immediate electron acceptor for the enzyme in this species is believed to be a menaquinone. Couples the redox reaction to proton translocation (for every two electrons transferred, four hydrogen ions are translocated across the cytoplasmic membrane), and thus conserves the redox energy in a proton gradient. This chain is NADH-quinone oxidoreductase subunit D, found in Chlorobium luteolum (strain DSM 273 / BCRC 81028 / 2530) (Pelodictyon luteolum).